Consider the following 560-residue polypeptide: Protein tweety homolog 3 (560 aa).

Residues 1–43 (MAAVVNYSPPWWVNLFHRLPHFNLQFQQTSSDFRPDDSDYQKA) lie on the Extracellular side of the membrane. The helical transmembrane segment at 44 to 64 (VLLLGAAALVCLALDLLFLLF) threads the bilayer. Residues 65 to 87 (YSFWLCCCRRKNHDSPNADCCCT) are Cytoplasmic-facing. The helical transmembrane segment at 88–108 (AWCVIIATLVCSAGIAVGFYG) threads the bilayer. Over 109 to 212 (NGETCDGVTR…TEQYDWYRWL (104 aa)) the chain is Extracellular. The Ca(2+) site is built by Glu111 and Asp114. N-linked (GlcNAc...) asparagine glycans are attached at residues Asn127 and Asn145. The helical transmembrane segment at 213-233 (GYLGLLLFDVIICLLVLVGLI) threads the bilayer. At 234–238 (RNSRS) the chain is on the cytoplasmic side. Residues 239 to 259 (ILIGVCFLGVLTLVISWASLG) traverse the membrane as a helical segment. Residues 260 to 387 (LEFSFAVGAS…LTGLCYDGVE (128 aa)) are Extracellular-facing. Disulfide bonds link Cys272–Cys382 and Cys300–Cys367. Asn352 carries N-linked (GlcNAc...) asparagine glycosylation. Residues 388 to 408 (GLIYLVLFSFVTALMFSSIVC) traverse the membrane as a helical segment. At 409 to 560 (SVPHTWQSKR…AIHRPHSAIH (152 aa)) the chain is on the cytoplasmic side. 2 disordered regions span residues 415 to 435 (QSKRSEEEDGDETSATLGSRA) and 486 to 560 (TPRC…SAIH). Residues 539–549 (TSRSAPNSRPN) show a composition bias toward polar residues.

It belongs to the tweety family. Homotetramer; disulfide-linked. Forms cis-homodimers in the presence of Ca(2+).

The protein localises to the cell membrane. It carries out the reaction chloride(in) = chloride(out). It catalyses the reaction L-glutamate(out) = L-glutamate(in). Its function is as follows. May act as a calcium-independent, swelling-dependent volume-regulated anion channel (VRAC-swell) which plays a pivotal role in the process of regulatory volume decrease (RVD) in the brain through the efflux of anions like chloride and organic osmolytes like glutamate. Probable large-conductance Ca(2+)-activated chloride channel. The protein is Protein tweety homolog 3 (ttyh3b) of Danio rerio (Zebrafish).